Here is a 598-residue protein sequence, read N- to C-terminus: Torsin-1A-interacting protein 1 (598 aa).

Topologically, residues 1-351 (MAGEGRRAEA…PQNASFVKRN (351 aa)) are nuclear. 2 disordered regions span residues 19 to 254 (VTPR…RSSS) and 267 to 314 (QNFT…IYGS). Serine 60 is modified (phosphoserine). Composition is skewed to basic and acidic residues over residues 73–101 (LVDK…EVRE) and 115–124 (RPQEAEEMKT). Phosphoserine is present on residues serine 135, serine 143, serine 154, serine 156, serine 157, and serine 187. The span at 205 to 214 (EATSVQQKVN) shows a compositional bias: polar residues. Phosphoserine is present on serine 216. A Phosphothreonine modification is found at threonine 221. 3 positions are modified to phosphoserine: serine 227, serine 230, and serine 242. A compositionally biased stretch (basic and acidic residues) spans 238 to 250 (RSRDSDESGDKTT). Polar residues-rich tracts occupy residues 277-287 (SVLSSGYQKTP) and 300-313 (RMQT…SIYG). Serine 320 bears the Phosphoserine mark. Residues 322-341 (LKSELGNQSPSTSSQQVTGQ) are disordered. Lysine 323 is covalently cross-linked (Glycyl lysine isopeptide (Lys-Gly) (interchain with G-Cter in SUMO2)). Polar residues predominate over residues 326-341 (LGNQSPSTSSQQVTGQ). Position 330 is a phosphoserine (serine 330). A helical membrane pass occupies residues 352–372 (WWWLLPLIAALASGSFWFFST). An interaction with TOR1A region spans residues 371–598 (STPEVETTAV…ENALKRGICL (228 aa)). At 373-598 (PEVETTAVQE…ENALKRGICL (226 aa)) the chain is on the perinuclear space side. Positions 374–450 (EVETTAVQEF…SEQIADAYSS (77 aa)) form a coiled coil. Asparagine 414 is a glycosylation site (N-linked (GlcNAc...) asparagine).

The protein belongs to the TOR1AIP family. As to quaternary structure, interacts with ATP1B4. Interacts with TOR1A (ATP-bound). Interacts with TOR1B, TOR2A and TOR3A.

It localises to the nucleus inner membrane. In terms of biological role, required for nuclear membrane integrity. Induces TOR1A and TOR1B ATPase activity and is required for their location on the nuclear membrane. Binds to A- and B-type lamins. Possible role in membrane attachment and assembly of the nuclear lamina. The sequence is that of Torsin-1A-interacting protein 1 (TOR1AIP1) from Pongo abelii (Sumatran orangutan).